The following is a 191-amino-acid chain: Calcium-activated potassium channel subunit beta-1 (191 aa).

Over 2–18 (GKKLVMAQRRGETRALC) the chain is Cytoplasmic. A helical membrane pass occupies residues 19–39 (LGVAMVVGAVITYYILGTTVL). Over 40 to 157 (PLYQKSVWTQ…YRRLYGPQSL (118 aa)) the chain is Extracellular. N-linked (GlcNAc...) asparagine glycosylation is found at N80 and N142. A helical transmembrane segment spans residues 158–178 (LFSLFWPTFLLTGGLLIIVMV). Residues 179–191 (KINQSLSILAAQR) are Cytoplasmic-facing.

It belongs to the KCNMB (TC 8.A.14.1) family. KCNMB1 subfamily. In terms of assembly, interacts with KCNMA1 tetramer. There are probably 4 molecules of KCMNB1 per KCNMA1 tetramer. In terms of processing, N-glycosylated.

The protein resides in the membrane. Regulatory subunit of the calcium activated potassium KCNMA1 (maxiK) channel. Modulates the calcium sensitivity and gating kinetics of KCNMA1, thereby contributing to KCNMA1 channel diversity. Increases the apparent Ca(2+)/voltage sensitivity of the KCNMA1 channel. It also modifies KCNMA1 channel kinetics and alters its pharmacological properties. It slows down the activation and the deactivation kinetics of the channel. Acts as a negative regulator of smooth muscle contraction by enhancing the calcium sensitivity to KCNMA1. Its presence is also a requirement for internal binding of the KCNMA1 channel opener dehydrosoyasaponin I (DHS-1) triterpene glycoside and for external binding of the agonist hormone 17-beta-estradiol (E2). Increases the binding activity of charybdotoxin (CTX) toxin to KCNMA1 peptide blocker by increasing the CTX association rate and decreasing the dissociation rate. This Bos taurus (Bovine) protein is Calcium-activated potassium channel subunit beta-1 (KCNMB1).